The following is a 428-amino-acid chain: Glutamate-1-semialdehyde 2,1-aminomutase (428 aa).

N6-(pyridoxal phosphate)lysine is present on K267.

It belongs to the class-III pyridoxal-phosphate-dependent aminotransferase family. HemL subfamily. As to quaternary structure, homodimer. Pyridoxal 5'-phosphate is required as a cofactor.

The protein resides in the cytoplasm. The catalysed reaction is (S)-4-amino-5-oxopentanoate = 5-aminolevulinate. It participates in porphyrin-containing compound metabolism; protoporphyrin-IX biosynthesis; 5-aminolevulinate from L-glutamyl-tRNA(Glu): step 2/2. This Trichlorobacter lovleyi (strain ATCC BAA-1151 / DSM 17278 / SZ) (Geobacter lovleyi) protein is Glutamate-1-semialdehyde 2,1-aminomutase.